A 108-amino-acid polypeptide reads, in one-letter code: UPF0145 protein THA_1434 (108 aa).

Belongs to the UPF0145 family.

The polypeptide is UPF0145 protein THA_1434 (Thermosipho africanus (strain TCF52B)).